The chain runs to 638 residues: Chaperone protein HtpG (638 aa).

The interval 1-345 is a; substrate-binding; sequence MTTETFEFQV…AQDLSLNVSR (345 aa). Residues 346–560 form a b region; the sequence is EILQQDRHIR…AGELTPALEN (215 aa). The interval 561-638 is c; the sequence is MYRAMGQEVP…LMADRLERTL (78 aa).

This sequence belongs to the heat shock protein 90 family. Homodimer.

It is found in the cytoplasm. Its function is as follows. Molecular chaperone. Has ATPase activity. This chain is Chaperone protein HtpG, found in Streptomyces coelicolor (strain ATCC BAA-471 / A3(2) / M145).